Here is a 70-residue protein sequence, read N- to C-terminus: Small ribosomal subunit protein bS21 (70 aa).

It belongs to the bacterial ribosomal protein bS21 family.

The sequence is that of Small ribosomal subunit protein bS21 from Nitrosomonas eutropha (strain DSM 101675 / C91 / Nm57).